The sequence spans 465 residues: GDNF family receptor alpha-2 (465 aa).

The first 21 residues, 1–21, serve as a signal peptide directing secretion; the sequence is MILANAFCIVLFVDETLRSLA. 14 disulfide bridges follow: Cys40–Cys93, Cys47–Cys53, Cys63–Cys78, Cys95–Cys105, Cys159–Cys220, Cys166–Cys172, Cys183–Cys198, Cys193–Cys239, Cys222–Cys227, Cys249–Cys321, Cys256–Cys262, Cys273–Cys291, Cys283–Cys345, and Cys323–Cys333. N-linked (GlcNAc...) asparagine glycosylation is found at Asn355, Asn387, and Asn412. A lipid anchor (GPI-anchor amidated serine) is attached at Ser445. Residues 446 to 465 constitute a propeptide, removed in mature form; it reads RHRAARILPAVPIVLLKLLL.

It belongs to the GDNFR family. As to quaternary structure, interacts with NRTN ligand and RET: forms a 2:2:2 ternary complex composed of NRTN ligand, GFRA2 and RET receptor.

The protein resides in the cell membrane. In terms of biological role, receptor for neurturin (NRTN), a growth factor that supports the survival of sympathetic neurons. NRTN-binding leads to autophosphorylation and activation of the RET receptor. The protein is GDNF family receptor alpha-2 (GFRA2) of Gallus gallus (Chicken).